Reading from the N-terminus, the 229-residue chain is Protein 33K (229 aa).

The tract at residues 1 to 157 is disordered; that stretch reads MAPKKKLQLP…GALRLAPNEP (157 aa). The span at 14–54 shows a compositional bias: acidic residues; sequence TDEEEYWDSQAEEVLDEEEEDMMEDWESLDEEASEVEEVSD. Low complexity-rich tracts occupy residues 55–64, 71–82, and 100–122; these read ETPSPSVAFP, SATGSSMATTSA, and TTGTRAAHTAPAAAAAAATAAAT. The interval 172-199 is necessary for nuclear subcellular location; sequence YAIFQQSRGQEQELKIKNRSLRSLTRSC. Positions 178-198 are RS-repeat; required for splicing enhancer activity; that stretch reads SRGQEQELKIKNRSLRSLTRS.

It belongs to the adenoviridae splicing factor family. As to quaternary structure, homooligomer. Interacts with DBP; this interaction occurs at a unique vertex during genome packaging. Interacts with IVa2; this interaction occurs at a unique vertex during genome packaging and seems to potentiate IVa2 and 33K oligomerization. Post-translationally, phosphorylated in vitro by human PKA and PRKDC. PRKDC inhibits, whereas PKA activates the splicing factor.

It is found in the host nucleus. Functionally, promotes alternative splicing of late transcripts by promoting splicing at weak 3' splice sites. Required for the temporal activation of major late pre-mRNA splicing at late times of infection. Induces the splicing and expression of the late capsid vertex protein. In terms of biological role, probably functions as the small terminase that is part of the molecular motor that translocates genomic DNA in empty capsid during DNA packaging. This motor is located at a unique vertex and comprises at least the IVa2 ATPase, the small terminase 33K and probably a portal. Forms a ring-like structure of about 17 nm in which genomic DNA is translocated into the capsid. Stimulates IVa2 ATPase activity in the presence of the viral genome. Once the DNA is packaged, the terminase detaches: the 33K protein is present in the empty particles, but not in the mature virions. Also involved in virion assembly. This chain is Protein 33K, found in Homo sapiens (Human).